A 366-amino-acid chain; its full sequence is Carbamoyl phosphate synthase small chain (366 aa).

Residues 1-172 (MYGILVLEDG…TYNAENEKTS (172 aa)) form a CPSase region. L-glutamine contacts are provided by Ser-45, Gly-220, and Gly-222. In terms of domain architecture, Glutamine amidotransferase type-1 spans 172–363 (SCVLIDCGVK…VELGIKFKAE (192 aa)). The active-site Nucleophile is the Cys-247. L-glutamine contacts are provided by Leu-248, Gln-251, Asn-289, Gly-291, and Phe-292. Residues His-336 and Glu-338 contribute to the active site.

Belongs to the CarA family. In terms of assembly, composed of two chains; the small (or glutamine) chain promotes the hydrolysis of glutamine to ammonia, which is used by the large (or ammonia) chain to synthesize carbamoyl phosphate. Tetramer of heterodimers (alpha,beta)4.

The catalysed reaction is hydrogencarbonate + L-glutamine + 2 ATP + H2O = carbamoyl phosphate + L-glutamate + 2 ADP + phosphate + 2 H(+). The enzyme catalyses L-glutamine + H2O = L-glutamate + NH4(+). The protein operates within amino-acid biosynthesis; L-arginine biosynthesis; carbamoyl phosphate from bicarbonate: step 1/1. It participates in pyrimidine metabolism; UMP biosynthesis via de novo pathway; (S)-dihydroorotate from bicarbonate: step 1/3. Small subunit of the glutamine-dependent carbamoyl phosphate synthetase (CPSase). CPSase catalyzes the formation of carbamoyl phosphate from the ammonia moiety of glutamine, carbonate, and phosphate donated by ATP, constituting the first step of 2 biosynthetic pathways, one leading to arginine and/or urea and the other to pyrimidine nucleotides. The small subunit (glutamine amidotransferase) binds and cleaves glutamine to supply the large subunit with the substrate ammonia. The protein is Carbamoyl phosphate synthase small chain of Methanococcus maripaludis (strain C7 / ATCC BAA-1331).